The sequence spans 101 residues: Small ribosomal subunit protein uS14 (101 aa).

It belongs to the universal ribosomal protein uS14 family. In terms of assembly, part of the 30S ribosomal subunit. Contacts proteins S3 and S10.

In terms of biological role, binds 16S rRNA, required for the assembly of 30S particles and may also be responsible for determining the conformation of the 16S rRNA at the A site. This chain is Small ribosomal subunit protein uS14, found in Buchnera aphidicola subsp. Schizaphis graminum (strain Sg).